Here is a 154-residue protein sequence, read N- to C-terminus: Ribonuclease H (154 aa).

Residues 5–146 (EQNIVYLYCD…ADELANRGID (142 aa)) enclose the RNase H type-1 domain. Mg(2+)-binding residues include Asp14, Glu52, Asp74, and Asp138.

Belongs to the RNase H family. In terms of assembly, monomer. The cofactor is Mg(2+).

It localises to the cytoplasm. It carries out the reaction Endonucleolytic cleavage to 5'-phosphomonoester.. Functionally, endonuclease that specifically degrades the RNA of RNA-DNA hybrids. The chain is Ribonuclease H from Coxiella burnetii (strain RSA 331 / Henzerling II).